Consider the following 434-residue polypeptide: Alpha-enolase (434 aa).

Residue Ser40 coordinates Mg(2+). Substrate is bound by residues His158 and Glu167. The active-site Proton donor is Glu210. Residues Asp245, Glu293, and Asp318 each contribute to the Mg(2+) site. Residues Glu293 and Asp318 each coordinate substrate. The Proton acceptor role is filled by Lys343. Substrate-binding positions include 370-373 (SHRS) and Lys394.

Belongs to the enolase family. Homodimer. Mg(2+) is required as a cofactor.

Its subcellular location is the cytoplasm. It carries out the reaction (2R)-2-phosphoglycerate = phosphoenolpyruvate + H2O. Its pathway is carbohydrate degradation; glycolysis; pyruvate from D-glyceraldehyde 3-phosphate: step 4/5. The chain is Alpha-enolase (ENO1) from Gallus gallus (Chicken).